Reading from the N-terminus, the 151-residue chain is Putative pre-16S rRNA nuclease (151 aa).

The protein belongs to the YqgF nuclease family.

Its subcellular location is the cytoplasm. In terms of biological role, could be a nuclease involved in processing of the 5'-end of pre-16S rRNA. The polypeptide is Putative pre-16S rRNA nuclease (Nostoc sp. (strain PCC 7120 / SAG 25.82 / UTEX 2576)).